The chain runs to 976 residues: Mast/stem cell growth factor receptor Kit (976 aa).

The first 25 residues, 1–25 (MRGARGAWDFLCVLLLLLRVQTGSS), serve as a signal peptide directing secretion. At 26–524 (QPSVSPGEPS…QIHPHTLFTP (499 aa)) the chain is on the extracellular side. Ig-like C2-type domains lie at 27 to 112 (PSVS…VFVR), 121 to 205 (DRSL…LKVR), 212 to 308 (PVVS…LEVV), 317 to 410 (PMIN…VYVN), and 413 to 507 (PEIL…FNFA). Cysteine 58 and cysteine 97 are oxidised to a cystine. Asparagine 130 and asparagine 145 each carry an N-linked (GlcNAc...) asparagine glycan. Intrachain disulfides connect cysteine 136/cysteine 186, cysteine 151/cysteine 183, and cysteine 233/cysteine 290. N-linked (GlcNAc...) asparagine glycans are attached at residues asparagine 283, asparagine 293, asparagine 300, asparagine 320, asparagine 352, asparagine 367, asparagine 463, and asparagine 486. An intrachain disulfide couples cysteine 428 to cysteine 491. The chain crosses the membrane as a helical span at residues 525 to 545 (LLIGFVIVAGMMCIIVMILTY). Topologically, residues 546–976 (KYLQKPMYEV…SQPLLVHDDV (431 aa)) are cytoplasmic. Residues tyrosine 547, tyrosine 553, tyrosine 568, and tyrosine 570 each carry the phosphotyrosine; by autocatalysis modification. Tyrosine 568 is a binding site for Mg(2+). The tract at residues 568–570 (YVY) is important for interaction with phosphotyrosine-binding proteins. A Protein kinase domain is found at 589–937 (LSFGKTLGAG…ISESTNHIYS (349 aa)). Residues 596–603 (GAGAFGKV), lysine 623, and 671–677 (EYCCYGD) each bind ATP. Tyrosine 703, tyrosine 721, and tyrosine 730 each carry phosphotyrosine; by autocatalysis. 2 positions are modified to phosphoserine; by PKC/PRKCA: serine 741 and serine 746. Catalysis depends on aspartate 792, which acts as the Proton acceptor. Arginine 796 is a binding site for ATP. The Mg(2+) site is built by asparagine 797 and aspartate 810. The residue at position 821 (serine 821) is a Phosphoserine. Tyrosine 823 carries the phosphotyrosine; by autocatalysis modification. The residue at position 891 (serine 891) is a Phosphoserine. 2 positions are modified to phosphotyrosine; by autocatalysis: tyrosine 900 and tyrosine 936. Serine 959 is subject to Phosphoserine.

It belongs to the protein kinase superfamily. Tyr protein kinase family. CSF-1/PDGF receptor subfamily. Monomer in the absence of bound KITLG/SCF. Homodimer in the presence of bound KITLG/SCF, forming a heterotetramer with two KITLG/SCF molecules. Interacts (via phosphorylated tyrosine residues) with the adapter proteins GRB2 and GRB7 (via SH2 domain), and SH2B2/APS. Interacts (via C-terminus) with MPDZ (via the tenth PDZ domain). Interacts (via phosphorylated tyrosine residues) with PIK3R1 and PIK3 catalytic subunit. Interacts (via phosphorylated tyrosine) with CRK (isoform Crk-II), FYN, SHC1 and MATK/CHK (via SH2 domain). Interacts with LYN and FES/FPS. Interacts (via phosphorylated tyrosine residues) with the protein phosphatases PTPN6/SHP-1 (via SH2 domain), PTPN11/SHP-2 (via SH2 domain) and PTPRU. Interacts with PLCG1. Interacts with DOK1 and TEC. Interacts (KITLG/SCF-bound) with IL1RL1. Interacts with IL1RAP (independent of stimulation with KITLG/SCF). A mast cell-specific KITLG/SCF-induced interleukin-33 signaling complex contains IL1RL1, IL1RAP, KIT and MYD88. In terms of processing, ubiquitinated by SOCS6. KIT is rapidly ubiquitinated after autophosphorylation induced by KITLG/SCF binding, leading to internalization and degradation. Post-translationally, autophosphorylated on tyrosine residues. KITLG/SCF binding enhances autophosphorylation. Isoform 1 shows low levels of tyrosine phosphorylation in the absence of added KITLG/SCF (in vitro). Kinase activity is down-regulated by phosphorylation on serine residues by protein kinase C family members. Phosphorylation at Tyr-568 is required for interaction with PTPN11/SHP-2, CRK (isoform Crk-II) and members of the SRC tyrosine-protein kinase family. Phosphorylation at Tyr-570 is required for interaction with PTPN6/SHP-1. Phosphorylation at Tyr-703, Tyr-823 and Tyr-936 is important for interaction with GRB2. Phosphorylation at Tyr-721 is important for interaction with PIK3R1. Phosphorylation at Tyr-823 and Tyr-936 is important for interaction with GRB7. In testis, detected in spermatogonia in the basal layer and in interstitial Leydig cells but not in Sertoli cells or spermatocytes inside the seminiferous tubules (at protein level). Expression is maintained in ejaculated spermatozoa (at protein level).

The protein resides in the cell membrane. The protein localises to the cytoplasm. The catalysed reaction is L-tyrosyl-[protein] + ATP = O-phospho-L-tyrosyl-[protein] + ADP + H(+). Present in an inactive conformation in the absence of bound ligand. KITLG/SCF binding leads to dimerization and activation by autophosphorylation on tyrosine residues. Activity is down-regulated by PRKCA-mediated phosphorylation on serine residues. Inhibited by imatinib/STI-571 (Gleevec) and sunitinib; these compounds maintain the kinase in an inactive conformation. In terms of biological role, tyrosine-protein kinase that acts as a cell-surface receptor for the cytokine KITLG/SCF and plays an essential role in the regulation of cell survival and proliferation, hematopoiesis, stem cell maintenance, gametogenesis, mast cell development, migration and function, and in melanogenesis. In response to KITLG/SCF binding, KIT can activate several signaling pathways. Phosphorylates PIK3R1, PLCG1, SH2B2/APS and CBL. Activates the AKT1 signaling pathway by phosphorylation of PIK3R1, the regulatory subunit of phosphatidylinositol 3-kinase. Activated KIT also transmits signals via GRB2 and activation of RAS, RAF1 and the MAP kinases MAPK1/ERK2 and/or MAPK3/ERK1. Promotes activation of STAT family members STAT1, STAT3, STAT5A and STAT5B. Activation of PLCG1 leads to the production of the cellular signaling molecules diacylglycerol and inositol 1,4,5-trisphosphate. KIT signaling is modulated by protein phosphatases, and by rapid internalization and degradation of the receptor. Activated KIT promotes phosphorylation of the protein phosphatases PTPN6/SHP-1 and PTPRU, and of the transcription factors STAT1, STAT3, STAT5A and STAT5B. Promotes phosphorylation of PIK3R1, CBL, CRK (isoform Crk-II), LYN, MAPK1/ERK2 and/or MAPK3/ERK1, PLCG1, SRC and SHC1. The chain is Mast/stem cell growth factor receptor Kit (KIT) from Homo sapiens (Human).